The sequence spans 390 residues: Succinate--CoA ligase [ADP-forming] subunit beta (390 aa).

The ATP-grasp domain occupies lysine 9–methionine 245. ATP is bound by residues lysine 46, glycine 53–glycine 55, glutamate 99, serine 102, and glutamate 107. Residues asparagine 200 and aspartate 214 each contribute to the Mg(2+) site. Substrate is bound by residues asparagine 265 and glycine 322–valine 324.

This sequence belongs to the succinate/malate CoA ligase beta subunit family. In terms of assembly, heterotetramer of two alpha and two beta subunits. Mg(2+) serves as cofactor.

It carries out the reaction succinate + ATP + CoA = succinyl-CoA + ADP + phosphate. The enzyme catalyses GTP + succinate + CoA = succinyl-CoA + GDP + phosphate. It participates in carbohydrate metabolism; tricarboxylic acid cycle; succinate from succinyl-CoA (ligase route): step 1/1. In terms of biological role, succinyl-CoA synthetase functions in the citric acid cycle (TCA), coupling the hydrolysis of succinyl-CoA to the synthesis of either ATP or GTP and thus represents the only step of substrate-level phosphorylation in the TCA. The beta subunit provides nucleotide specificity of the enzyme and binds the substrate succinate, while the binding sites for coenzyme A and phosphate are found in the alpha subunit. The protein is Succinate--CoA ligase [ADP-forming] subunit beta of Coxiella burnetii (strain RSA 331 / Henzerling II).